We begin with the raw amino-acid sequence, 740 residues long: Ion-translocating oxidoreductase complex subunit C (740 aa).

4Fe-4S ferredoxin-type domains are found at residues 369–397 (GEPQEEQSCIRCSACADACPADLLPQQLY) and 407–436 (KATTHNIADCIECGACAWVCPSNIPLVQYF). The [4Fe-4S] cluster site is built by Cys377, Cys380, Cys383, Cys387, Cys416, Cys419, Cys422, and Cys426. A disordered region spans residues 602–684 (KLEQQQANAE…EPEEQVDPRK (83 aa)). Composition is skewed to low complexity over residues 605 to 615 (QQQANAEPEQQ) and 637 to 647 (QQQANAEPEQQ).

The protein belongs to the 4Fe4S bacterial-type ferredoxin family. RnfC subfamily. As to quaternary structure, the complex is composed of six subunits: RsxA, RsxB, RsxC, RsxD, RsxE and RsxG. The cofactor is [4Fe-4S] cluster.

The protein resides in the cell inner membrane. Part of a membrane-bound complex that couples electron transfer with translocation of ions across the membrane. Required to maintain the reduced state of SoxR. In Escherichia coli O7:K1 (strain IAI39 / ExPEC), this protein is Ion-translocating oxidoreductase complex subunit C.